The following is a 456-amino-acid chain: Dual-specificity RNA methyltransferase RlmN (456 aa).

The interval 1–21 (MIQRHLGQPRLIQNGGDAGGV) is disordered. Glu175 (proton acceptor) is an active-site residue. The Radical SAM core domain maps to 183–416 (DEERGAVCIS…QDAGYSAPIR (234 aa)). Cys190 and Cys427 are joined by a disulfide. Cys197, Cys201, and Cys204 together coordinate [4Fe-4S] cluster. S-adenosyl-L-methionine is bound by residues 253–254 (GE), Ser285, 307–309 (SLH), and Asn384. Catalysis depends on Cys427, which acts as the S-methylcysteine intermediate.

This sequence belongs to the radical SAM superfamily. RlmN family. Requires [4Fe-4S] cluster as cofactor.

It is found in the cytoplasm. The enzyme catalyses adenosine(2503) in 23S rRNA + 2 reduced [2Fe-2S]-[ferredoxin] + 2 S-adenosyl-L-methionine = 2-methyladenosine(2503) in 23S rRNA + 5'-deoxyadenosine + L-methionine + 2 oxidized [2Fe-2S]-[ferredoxin] + S-adenosyl-L-homocysteine. The catalysed reaction is adenosine(37) in tRNA + 2 reduced [2Fe-2S]-[ferredoxin] + 2 S-adenosyl-L-methionine = 2-methyladenosine(37) in tRNA + 5'-deoxyadenosine + L-methionine + 2 oxidized [2Fe-2S]-[ferredoxin] + S-adenosyl-L-homocysteine. Its function is as follows. Specifically methylates position 2 of adenine 2503 in 23S rRNA and position 2 of adenine 37 in tRNAs. m2A2503 modification seems to play a crucial role in the proofreading step occurring at the peptidyl transferase center and thus would serve to optimize ribosomal fidelity. This Paramagnetospirillum magneticum (strain ATCC 700264 / AMB-1) (Magnetospirillum magneticum) protein is Dual-specificity RNA methyltransferase RlmN.